The primary structure comprises 176 residues: 2-oxo-4-hydroxy-4-carboxy-5-ureidoimidazoline decarboxylase (176 aa).

His70 (proton donor; for OHCU decarboxylase activity) is an active-site residue. Substrate is bound by residues Pro71, 83-87 (SQEEQ), and 118-122 (FIMAV). Residues 72 to 96 (DLGERTEMTDESQEEQASAGLDRLP) form a disordered region.

This sequence belongs to the OHCU decarboxylase family.

The enzyme catalyses 5-hydroxy-2-oxo-4-ureido-2,5-dihydro-1H-imidazole-5-carboxylate + H(+) = (S)-allantoin + CO2. It functions in the pathway purine metabolism; urate degradation; (S)-allantoin from urate: step 3/3. Functionally, catalyzes the stereoselective decarboxylation of 2-oxo-4-hydroxy-4-carboxy-5-ureidoimidazoline (OHCU) to (S)-allantoin. This chain is 2-oxo-4-hydroxy-4-carboxy-5-ureidoimidazoline decarboxylase, found in Halalkalicoccus jeotgali (strain DSM 18796 / CECT 7217 / JCM 14584 / KCTC 4019 / B3).